The chain runs to 98 residues: UPF0235 protein azo3464 (98 aa).

This sequence belongs to the UPF0235 family.

This Azoarcus sp. (strain BH72) protein is UPF0235 protein azo3464.